The primary structure comprises 576 residues: Proline--tRNA ligase (576 aa).

This sequence belongs to the class-II aminoacyl-tRNA synthetase family. ProS type 1 subfamily. Homodimer.

It is found in the cytoplasm. It catalyses the reaction tRNA(Pro) + L-proline + ATP = L-prolyl-tRNA(Pro) + AMP + diphosphate. Functionally, catalyzes the attachment of proline to tRNA(Pro) in a two-step reaction: proline is first activated by ATP to form Pro-AMP and then transferred to the acceptor end of tRNA(Pro). As ProRS can inadvertently accommodate and process non-cognate amino acids such as alanine and cysteine, to avoid such errors it has two additional distinct editing activities against alanine. One activity is designated as 'pretransfer' editing and involves the tRNA(Pro)-independent hydrolysis of activated Ala-AMP. The other activity is designated 'posttransfer' editing and involves deacylation of mischarged Ala-tRNA(Pro). The misacylated Cys-tRNA(Pro) is not edited by ProRS. This chain is Proline--tRNA ligase, found in Leptospira borgpetersenii serovar Hardjo-bovis (strain JB197).